A 177-amino-acid polypeptide reads, in one-letter code: F(420)H(2) dehydrogenase subunit I (177 aa).

The interval 1 to 21 (MGCPEVQDRPGSGYELEETPA) is disordered. 4Fe-4S ferredoxin-type domains lie at 76 to 105 (GLQT…IVKA) and 116 to 145 (WFPQ…SGKE). Residues cysteine 85, cysteine 88, cysteine 91, cysteine 95, cysteine 125, cysteine 128, cysteine 131, and cysteine 135 each contribute to the [4Fe-4S] cluster site.

The protein belongs to the complex I 23 kDa subunit family. In terms of assembly, the FPO complex is composed of at least 13 different subunits. [4Fe-4S] cluster serves as cofactor.

The catalysed reaction is methanophenazine + reduced coenzyme F420-(gamma-L-Glu)(n) = dihydromethanophenazine + oxidized coenzyme F420-(gamma-L-Glu)(n) + H(+). Component of the F(420)H(2) dehydrogenase (FPO complex) which is part of the energy-conserving F(420)H(2):heterodisulfide oxidoreductase system. The membrane-bound electron transfer system of the complex plays an important role in the metabolism of methylotrophic methanogens when the organisms grow on methanol or methylamines. Catalyzes the oxidation of methanophenazine to dihydromethanophenazine. It shuttles electrons from F(420)H(2), via FAD and iron-sulfur (Fe-S) centers, to methanophenazine (an electron carrier in the membrane). It couples the redox reaction to proton translocation (for every two electrons transferred, two hydrogen ions are translocated across the cytoplasmic membrane), and thus conserves the redox energy in a proton gradient. It also catalyzes the oxidation of F(420)H(2) with quinones such as 2,3-dimethyl-1,4-naphthoquinone, 2-methyl-1,4-naphthoquinone and tetramethyl-p-benzoquinone. This Methanosarcina mazei (strain ATCC BAA-159 / DSM 3647 / Goe1 / Go1 / JCM 11833 / OCM 88) (Methanosarcina frisia) protein is F(420)H(2) dehydrogenase subunit I (fpoI).